Consider the following 400-residue polypeptide: Tektin-B1 (400 aa).

Coiled-coil stretches lie at residues 35–81 (TRLS…AKAL), 236–294 (FALR…LENR), and 310–353 (GLVN…LELK).

It belongs to the tektin family. In terms of assembly, may form a heterodimer with tektin a or exist as a homodimer. Cilia and flagella.

The protein resides in the cytoplasm. Its subcellular location is the cytoskeleton. Functionally, structural component of ciliary and flagellar microtubules. This is Tektin-B1 from Strongylocentrotus purpuratus (Purple sea urchin).